The sequence spans 218 residues: Glutathione S-transferase Mu 1 (218 aa).

The GST N-terminal domain maps to 2–88; the sequence is PMILGYWDIR…YIARKHNLCG (87 aa). Glutathione contacts are provided by residues 7–8, 43–46, Lys-50, 59–60, and 72–73; these read YW, RSQW, NL, and QS. A GST C-terminal domain is found at 90-208; it reads TEEEMIRVDI…KSSRFLPGPL (119 aa). A substrate-binding site is contributed by Tyr-116.

The protein belongs to the GST superfamily. Mu family. Homodimer.

It is found in the cytoplasm. The enzyme catalyses RX + glutathione = an S-substituted glutathione + a halide anion + H(+). It carries out the reaction prostaglandin A2 + glutathione = prostaglandin A2-S-(R)-glutathione. The catalysed reaction is prostaglandin J2 + glutathione = prostaglandin J2-S-(R)-glutathione. It catalyses the reaction prostaglandin J2 + glutathione = prostaglandin J2-S-(S)-glutathione. The enzyme catalyses prostaglandin A2 + glutathione = prostaglandin A2-S-(S)-glutathione. It carries out the reaction 11(S)-hydroxy-14(S),15(S)-epoxy-(5Z,8Z,12E)-eicosatrienoate + glutathione = (11S,15S)-dihydroxy-14(R)-S-glutathionyl-(5Z,8Z,12E)-eicosatrienoate. Its function is as follows. Conjugation of reduced glutathione to a wide number of exogenous and endogenous hydrophobic electrophiles. Protects against the thiol-mediated metal-catalyzed oxidative inactivation of enzymes. Involved in the formation of glutathione conjugates of both prostaglandin A2 (PGA2) and prostaglandin J2 (PGJ2). Participates in the formation of novel hepoxilin regioisomers. This Bos taurus (Bovine) protein is Glutathione S-transferase Mu 1 (GSTM1).